The sequence spans 272 residues: Undecaprenyl-diphosphatase (272 aa).

The next 8 helical transmembrane spans lie at isoleucine 4–proline 24, alanine 45–tryptophan 65, leucine 89–histidine 109, leucine 115–alanine 135, threonine 152–serine 174, tyrosine 189–leucine 209, methionine 225–leucine 245, and isoleucine 251–phenylalanine 271.

It belongs to the UppP family.

It is found in the cell inner membrane. It catalyses the reaction di-trans,octa-cis-undecaprenyl diphosphate + H2O = di-trans,octa-cis-undecaprenyl phosphate + phosphate + H(+). In terms of biological role, catalyzes the dephosphorylation of undecaprenyl diphosphate (UPP). Confers resistance to bacitracin. The polypeptide is Undecaprenyl-diphosphatase (Citrobacter koseri (strain ATCC BAA-895 / CDC 4225-83 / SGSC4696)).